A 267-amino-acid polypeptide reads, in one-letter code: 2-oxo-hept-4-ene-1,7-dioate hydratase (267 aa).

Mg(2+) is bound by residues glutamate 106, glutamate 108, and glutamate 139.

It belongs to the hydratase/decarboxylase family. Homodecamer. Requires Mg(2+) as cofactor.

The catalysed reaction is (4Z)-2-oxohept-4-enedioate + H2O = (4S)-4-hydroxy-2-oxoheptanedioate. Its pathway is aromatic compound metabolism; 4-hydroxyphenylacetate degradation; pyruvate and succinate semialdehyde from 4-hydroxyphenylacetate: step 6/7. In terms of biological role, transforms 2-oxo-hept-4-ene-1,7-dioate (OHED) into 4-hydroxy-2-oxoheptanedioate, a step in the 4-hydroxyphenylacetic acid (4-HPA) degradation pathway. The polypeptide is 2-oxo-hept-4-ene-1,7-dioate hydratase (Escherichia coli).